The sequence spans 152 residues: Protein-export protein SecB (152 aa).

The protein belongs to the SecB family. Homotetramer, a dimer of dimers. One homotetramer interacts with 1 SecA dimer.

Its subcellular location is the cytoplasm. Its function is as follows. One of the proteins required for the normal export of preproteins out of the cell cytoplasm. It is a molecular chaperone that binds to a subset of precursor proteins, maintaining them in a translocation-competent state. It also specifically binds to its receptor SecA. The chain is Protein-export protein SecB from Rickettsia bellii (strain RML369-C).